We begin with the raw amino-acid sequence, 272 residues long: MTREIAIGNVKMGGSRPLVLIAGPCVIENETATLRCAERLMTIVNGLSIPLIFKASYDKANRTSVTAFRGPGLKEGLRILAKVKESLGLPVISDIHSIEQVQPAAEVLDILQIPAFLCRQTDLLVEAARTGCVVNVKKGQFLAPWDMENVVGKIVASGNERIILTERGASFGYNNLVSDMRSLPIMRRFGFPVVFDATHSVQLPGGQGGSSGGQREFVEYLSRAAVATGIDGVFLEVHEEPDKALCDGPNSVPLDDLPVLLKKLKAIDAIVK.

The protein belongs to the KdsA family.

The protein resides in the cytoplasm. It catalyses the reaction D-arabinose 5-phosphate + phosphoenolpyruvate + H2O = 3-deoxy-alpha-D-manno-2-octulosonate-8-phosphate + phosphate. It functions in the pathway carbohydrate biosynthesis; 3-deoxy-D-manno-octulosonate biosynthesis; 3-deoxy-D-manno-octulosonate from D-ribulose 5-phosphate: step 2/3. It participates in bacterial outer membrane biogenesis; lipopolysaccharide biosynthesis. This Geobacter metallireducens (strain ATCC 53774 / DSM 7210 / GS-15) protein is 2-dehydro-3-deoxyphosphooctonate aldolase.